The primary structure comprises 265 residues: Undecaprenyl-diphosphatase (265 aa).

The next 8 membrane-spanning stretches (helical) occupy residues 1-21 (MDFI…FLPI), 39-61 (QGLA…YFRL), 85-105 (LAWA…MLTE), 115-135 (LIIA…DWAG), 149-169 (ILFI…RSGI), 187-207 (FSFL…ALDL), 218-238 (ALAL…HYFF), and 244-264 (IGML…FYLF).

It belongs to the UppP family.

It is found in the cell inner membrane. It catalyses the reaction di-trans,octa-cis-undecaprenyl diphosphate + H2O = di-trans,octa-cis-undecaprenyl phosphate + phosphate + H(+). In terms of biological role, catalyzes the dephosphorylation of undecaprenyl diphosphate (UPP). Confers resistance to bacitracin. In Nitrosococcus oceani (strain ATCC 19707 / BCRC 17464 / JCM 30415 / NCIMB 11848 / C-107), this protein is Undecaprenyl-diphosphatase.